The following is a 903-amino-acid chain: Translation initiation factor IF-2 (903 aa).

2 disordered regions span residues 57 to 171 (EKFK…QRRR) and 267 to 318 (PTPQ…EAVT). The span at 69–163 (KKEAKEPSEK…SEPQKPKESL (95 aa)) shows a compositional bias: basic and acidic residues. Over residues 267–278 (PTPQPMQKTKQP) the composition is skewed to low complexity. A compositionally biased stretch (basic residues) spans 299-308 (RRARKKHKKP). The 168-residue stretch at 402 to 569 (PRAPVITIMG…IVLLQAEILE (168 aa)) folds into the tr-type G domain. The segment at 411–418 (GHVDHGKT) is G1. 411–418 (GHVDHGKT) serves as a coordination point for GTP. Residues 436-440 (GITQH) are G2. The tract at residues 457-460 (DTPG) is G3. Residues 457–461 (DTPGH) and 511–514 (NKMD) contribute to the GTP site. The tract at residues 511-514 (NKMD) is G4. Positions 547 to 549 (SAK) are G5.

It belongs to the TRAFAC class translation factor GTPase superfamily. Classic translation factor GTPase family. IF-2 subfamily.

The protein localises to the cytoplasm. Its function is as follows. One of the essential components for the initiation of protein synthesis. Protects formylmethionyl-tRNA from spontaneous hydrolysis and promotes its binding to the 30S ribosomal subunits. Also involved in the hydrolysis of GTP during the formation of the 70S ribosomal complex. The polypeptide is Translation initiation factor IF-2 (Campylobacter curvus (strain 525.92)).